The sequence spans 493 residues: MEHKEIVIGVDIGSRKICAIVAEFKDGILRIIGTAHQDSKEINSKAIKRGRINSLAHASNAIKEVINSAKKMAGLNADEDRNNPISSFRESYHPKTKAIVSFSGAYTESIRDVTGVASTKDNVVTIDEINRAINNACAKAGLDNDKHILHALPYRFTLDKQEVNDPLGMSGTRLEVFIHIVYTEKNNIENLEKIMIQSGVEIENIVINSYAASIATLSNDERELGVACVDMGGETCNLTIYSGNSIRYNKYLPVGSHHLTTDLSHMLNTPFPYAEEVKIKYGDLSFESGAETPSQSVQIPTTGSDGHESHIVPLSEIQTIMRERALETFKIIHRSIQDSGFEEHLGGGVVLTGGMALMKGIKELARTHFTNYPVRLATPVEKYNIMGMFEDLKDPRFSVVVGLILYKAGGHTNYERDSKGIIRYHESDDYIRKAHQSNPTPHIHSSPTERNLSDLKTPSAPLNTAKNDDFLPIKPTEQKGFFQNLLDKISKIF.

The segment at 434 to 468 (AHQSNPTPHIHSSPTERNLSDLKTPSAPLNTAKND) is disordered. Over residues 436–465 (QSNPTPHIHSSPTERNLSDLKTPSAPLNTA) the composition is skewed to polar residues.

This sequence belongs to the FtsA/MreB family. Self-interacts. Interacts with FtsZ.

Its subcellular location is the cell inner membrane. Cell division protein that is involved in the assembly of the Z ring. May serve as a membrane anchor for the Z ring. The sequence is that of Cell division protein FtsA from Helicobacter pylori (strain J99 / ATCC 700824) (Campylobacter pylori J99).